The following is a 100-amino-acid chain: Integration host factor subunit alpha (100 aa).

The interval 54-73 (DLRDKRQRPGRNPKTGEEIP) is disordered.

This sequence belongs to the bacterial histone-like protein family. Heterodimer of an alpha and a beta chain.

Functionally, this protein is one of the two subunits of integration host factor, a specific DNA-binding protein that functions in genetic recombination as well as in transcriptional and translational control. This Pseudomonas aeruginosa (strain UCBPP-PA14) protein is Integration host factor subunit alpha.